Consider the following 605-residue polypeptide: Inactive LRR receptor-like serine/threonine-protein kinase BIR2 (605 aa).

Positions 1 to 28 are cleaved as a signal peptide; the sequence is MKEIGSKPRKLLPLCFIIFLCFCSSVMA. Residues 29-229 are Extracellular-facing; sequence ADEDDIRCLR…CGGLSKKNLG (201 aa). Residue N58 is glycosylated (N-linked (GlcNAc...) asparagine). LRR repeat units follow at residues 101-125, 127-150, 152-173, and 174-197; these read CASL…LCNW, PFLV…LAKC, FVNS…QFSA, and LGRL…FFSS. Residues 230 to 250 form a helical membrane-spanning segment; the sequence is IIIAAGVFGAAASMLLAFGIW. At 251-605 the chain is on the cytoplasmic side; it reads WYYHLKWTRR…IFDTQENEKV (355 aa). S271 bears the Phosphoserine; by BAK1 mark. T283 carries the phosphothreonine; by BAK1 modification. A Phosphoserine; by BAK1 modification is found at S286. The residue at position 304 (T304) is a Phosphothreonine; by BAK1. The Protein kinase domain maps to 307–578; sequence FNSENIIVST…FQAYQSLKAI (272 aa). 313-321 serves as a coordination point for ATP; the sequence is IVSTRTGTT. Phosphoserine; by BAK1 is present on S330. ATP is bound at residue K335. Phosphoserine; by BAK1 is present on S389. Residue T402 is modified to Phosphothreonine. Phosphoserine; by BAK1 is present on residues S448 and S462. T466 is subject to Phosphothreonine; by BAK1. Position 479 is a phosphotyrosine (Y479). T482 bears the Phosphothreonine mark. Phosphoserine is present on S486. T533 is modified (phosphothreonine; by BAK1).

Belongs to the protein kinase superfamily. Ser/Thr protein kinase family. As to quaternary structure, interacts constitutively with BAK1, when phosphorylated, thereby preventing interaction with the ligand-binding LRR-RLK FLS2. Upon infection, pathogen-associated molecular patterns (PAMP) perception leads to BIR2 release from the BAK1 complex and enables the recruitment of BAK1 into the FLS2 complex. Post-translationally, phosphorylated by BAK1, this interacts promotes interaction with BAK1.

The protein localises to the cell membrane. Its function is as follows. Pseudokinases lacking protein kinase activity and unable to bind ATP-analogs. Negative regulator of pathogen-associated molecular patterns- (PAMP-) triggered immunity by limiting BAK1-receptor complex formation in the absence of ligands. The sequence is that of Inactive LRR receptor-like serine/threonine-protein kinase BIR2 from Arabidopsis thaliana (Mouse-ear cress).